The primary structure comprises 325 residues: tRNA uridine(34) hydroxylase (325 aa).

The 97-residue stretch at 122 to 218 folds into the Rhodanese domain; sequence EENRCLVLDV…YGQAMGTGKW (97 aa). Cysteine 178 acts as the Cysteine persulfide intermediate in catalysis.

Belongs to the TrhO family.

The catalysed reaction is uridine(34) in tRNA + AH2 + O2 = 5-hydroxyuridine(34) in tRNA + A + H2O. In terms of biological role, catalyzes oxygen-dependent 5-hydroxyuridine (ho5U) modification at position 34 in tRNAs. This Chlamydia felis (strain Fe/C-56) (Chlamydophila felis) protein is tRNA uridine(34) hydroxylase.